We begin with the raw amino-acid sequence, 273 residues long: 2,3,4,5-tetrahydropyridine-2,6-dicarboxylate N-succinyltransferase (273 aa).

The protein belongs to the transferase hexapeptide repeat family.

Its subcellular location is the cytoplasm. The catalysed reaction is (S)-2,3,4,5-tetrahydrodipicolinate + succinyl-CoA + H2O = (S)-2-succinylamino-6-oxoheptanedioate + CoA. The protein operates within amino-acid biosynthesis; L-lysine biosynthesis via DAP pathway; LL-2,6-diaminopimelate from (S)-tetrahydrodipicolinate (succinylase route): step 1/3. The protein is 2,3,4,5-tetrahydropyridine-2,6-dicarboxylate N-succinyltransferase of Bordetella petrii (strain ATCC BAA-461 / DSM 12804 / CCUG 43448).